The primary structure comprises 171 residues: 3-hydroxydecanoyl-[acyl-carrier-protein] dehydratase (171 aa).

The active site involves His-70.

Belongs to the thioester dehydratase family. FabA subfamily. Homodimer.

Its subcellular location is the cytoplasm. It catalyses the reaction a (3R)-hydroxyacyl-[ACP] = a (2E)-enoyl-[ACP] + H2O. It carries out the reaction (3R)-hydroxydecanoyl-[ACP] = (2E)-decenoyl-[ACP] + H2O. The catalysed reaction is (2E)-decenoyl-[ACP] = (3Z)-decenoyl-[ACP]. It participates in lipid metabolism; fatty acid biosynthesis. Functionally, necessary for the introduction of cis unsaturation into fatty acids. Catalyzes the dehydration of (3R)-3-hydroxydecanoyl-ACP to E-(2)-decenoyl-ACP and then its isomerization to Z-(3)-decenoyl-ACP. Can catalyze the dehydratase reaction for beta-hydroxyacyl-ACPs with saturated chain lengths up to 16:0, being most active on intermediate chain length. This chain is 3-hydroxydecanoyl-[acyl-carrier-protein] dehydratase, found in Stutzerimonas stutzeri (strain A1501) (Pseudomonas stutzeri).